The following is a 469-amino-acid chain: E3 ubiquitin-protein ligase TRIM21 (469 aa).

Residues 16-55 form an RING-type zinc finger; sequence CSICLDPMVEPMSIECGHSFCQECISEVGKEGGSVCPVCR. The B box-type zinc-finger motif lies at 87-128; it reads PHGELCVVHREKIHLFCEEDGKALCWVCSQSQKHRDHPMVPI. 4 residues coordinate Zn(2+): C92, H95, C114, and H120. The stretch at 128–245 forms a coiled coil; that stretch reads IEEAAQEYQE…RRGSALELLQ (118 aa). Phosphoserine is present on S266. Residues 268 to 467 enclose the B30.2/SPRY domain; it reads DLRNVFYVPG…APLILCPLKT (200 aa).

It belongs to the TRIM/RBCC family. In terms of assembly, homotrimer. Interacts (via C-terminus) with IRF8 (via C-terminus). Component of a SCF(SKP2)-like complex containing CUL1, SKP1, TRIM21 and SKP2. Interacts with CALR, CUL1, FBXW11, HSPA5, IKBKB, IRF3, SKP1 and VCP. Interacts with SKP2; the interaction with SKP2 does not depend on an intact F-box domain. Interacts (via N-terminus and C-terminus) with DCP2 (via N-terminus and C-terminus). Interacts with ULK1, BECN1 and with ATG8 family members, including GABARAP, GABARAPL1, GABARAPL2 and MAP1LC3C/LC3C. Interacts with TRIM21 and SQSTM1/sequestosome 1. Interacts with IRF3. Interacts (via the SPRY domain) with NMI (via coiled-coil domain); the interaction promotes 'Lys-63'-linked ubiquitination of NMI. Interacts with IFI35 and NMI; the interaction facilitates NMI-IFI35 complex formation. In terms of processing, autoubiquitinated; does not lead to its proteasomal degradation. Deubiquitinated by USP4; leading to its stabilization.

It localises to the cytoplasm. Its subcellular location is the cytoplasmic vesicle. It is found in the autophagosome. The protein resides in the nucleus. The protein localises to the P-body. It localises to the stress granule. The catalysed reaction is S-ubiquitinyl-[E2 ubiquitin-conjugating enzyme]-L-cysteine + [acceptor protein]-L-lysine = [E2 ubiquitin-conjugating enzyme]-L-cysteine + N(6)-ubiquitinyl-[acceptor protein]-L-lysine.. It functions in the pathway protein modification; protein ubiquitination. In terms of biological role, E3 ubiquitin-protein ligase whose activity is dependent on E2 enzymes, UBE2D1, UBE2D2, UBE2E1 and UBE2E2. Forms a ubiquitin ligase complex in cooperation with the E2 UBE2D2 that is used not only for the ubiquitination of USP4 and IKBKB but also for its self-ubiquitination. Component of cullin-RING-based SCF (SKP1-CUL1-F-box protein) E3 ubiquitin-protein ligase complexes such as SCF(SKP2)-like complexes. A TRIM21-containing SCF(SKP2)-like complex is shown to mediate ubiquitination of CDKN1B ('Thr-187' phosphorylated-form), thereby promoting its degradation by the proteasome. Monoubiquitinates IKBKB that will negatively regulates Tax-induced NF-kappa-B signaling. Negatively regulates IFN-beta production post-pathogen recognition by catalyzing polyubiquitin-mediated degradation of IRF3. Mediates the ubiquitin-mediated proteasomal degradation of IgG1 heavy chain, which is linked to the VCP-mediated ER-associated degradation (ERAD) pathway. Promotes IRF8 ubiquitination, which enhanced the ability of IRF8 to stimulate cytokine genes transcription in macrophages. Plays a role in the regulation of the cell cycle progression. Enhances the decapping activity of DCP2. Exists as a ribonucleoprotein particle present in all mammalian cells studied and composed of a single polypeptide and one of four small RNA molecules. At least two isoforms are present in nucleated and red blood cells, and tissue specific differences in RO/SSA proteins have been identified. The common feature of these proteins is their ability to bind HY RNAs.2. Involved in the regulation of innate immunity and the inflammatory response in response to IFNG/IFN-gamma. Organizes autophagic machinery by serving as a platform for the assembly of ULK1, Beclin 1/BECN1 and ATG8 family members and recognizes specific autophagy targets, thus coordinating target recognition with assembly of the autophagic apparatus and initiation of autophagy. Also regulates autophagy through FIP200/RB1CC1 ubiquitination and subsequent decreased protein stability. Represses the innate antiviral response by facilitating the formation of the NMI-IFI35 complex through 'Lys-63'-linked ubiquitination of NMI. During viral infection, promotes cell pyroptosis by mediating 'Lys-6'-linked ubiquitination of ISG12a/IFI27, facilitating its translocation into the mitochondria and subsequent CASP3 activation. When up-regulated through the IFN/JAK/STAT signaling pathway, promotes 'Lys-27'-linked ubiquitination of MAVS, leading to the recruitment of TBK1 and up-regulation of innate immunity. Mediates 'Lys-63'-linked polyubiquitination of G3BP1 in response to heat shock, leading to stress granule disassembly. The protein is E3 ubiquitin-protein ligase TRIM21 (TRIM21) of Bos taurus (Bovine).